The following is a 64-amino-acid chain: Large ribosomal subunit protein bL28 (64 aa).

The disordered stretch occupies residues 1-23 (MSKECYFTGRKTVSSNNRSHAMN). A compositionally biased stretch (polar residues) spans 11-23 (KTVSSNNRSHAMN).

Belongs to the bacterial ribosomal protein bL28 family.

In Lactococcus lactis subsp. cremoris (strain SK11), this protein is Large ribosomal subunit protein bL28.